Consider the following 221-residue polypeptide: Probable septum site-determining protein MinC (221 aa).

Belongs to the MinC family. Interacts with MinD and FtsZ.

Its function is as follows. Cell division inhibitor that blocks the formation of polar Z ring septums. Rapidly oscillates between the poles of the cell to destabilize FtsZ filaments that have formed before they mature into polar Z rings. Prevents FtsZ polymerization. The polypeptide is Probable septum site-determining protein MinC (Aliivibrio fischeri (strain MJ11) (Vibrio fischeri)).